Consider the following 712-residue polypeptide: 1,4-alpha-glucan branching enzyme GlgB (712 aa).

Catalysis depends on Asp-397, which acts as the Nucleophile. The Proton donor role is filled by Glu-450.

It belongs to the glycosyl hydrolase 13 family. GlgB subfamily. As to quaternary structure, monomer.

It carries out the reaction Transfers a segment of a (1-&gt;4)-alpha-D-glucan chain to a primary hydroxy group in a similar glucan chain.. The protein operates within glycan biosynthesis; glycogen biosynthesis. Functionally, catalyzes the formation of the alpha-1,6-glucosidic linkages in glycogen by scission of a 1,4-alpha-linked oligosaccharide from growing alpha-1,4-glucan chains and the subsequent attachment of the oligosaccharide to the alpha-1,6 position. The sequence is that of 1,4-alpha-glucan branching enzyme GlgB from Bradyrhizobium sp. (strain BTAi1 / ATCC BAA-1182).